Reading from the N-terminus, the 227-residue chain is Esterase Rv3036c (227 aa).

Residues 3–23 (YLIATAVLVAVVLVGWPAAGA) form a helical membrane-spanning segment.

It belongs to the RsiV family.

Its subcellular location is the cell membrane. It is found in the secreted. The protein resides in the cell wall. The enzyme catalyses a fatty acid ester + H2O = an aliphatic alcohol + a fatty acid + H(+). It catalyses the reaction an acetyl ester + H2O = an aliphatic alcohol + acetate + H(+). The catalysed reaction is a butanoate ester + H2O = an aliphatic alcohol + butanoate + H(+). It carries out the reaction a hexanoate ester + H2O = an aliphatic alcohol + hexanoate + H(+). The enzyme catalyses a dodecanoate ester + H2O = an aliphatic alcohol + dodecanoate + H(+). It catalyses the reaction a tetradecanoate ester + H2O = an aliphatic alcohol + tetradecanoate + H(+). The catalysed reaction is an octanoate ester + H2O = an aliphatic alcohol + octanoate + H(+). Hydrolyzes ester substrates carbon chain lengths ranging from C2 to C14. In vitro, acetate (C2), butyrate (C4) and caprylate (C6) are hydrolyzed with high efficiency. Has lower activity against laurate (C12), myristate (C14) and caproate (C8), and weak activity against palmitate (C16). The protein is Esterase Rv3036c of Mycobacterium tuberculosis (strain ATCC 25618 / H37Rv).